Reading from the N-terminus, the 381-residue chain is Probable tRNA sulfurtransferase (381 aa).

The THUMP domain occupies 60-168 (REATEVLTRV…EGKAYIFVDK (109 aa)). ATP is bound by residues 186–187 (LL), lysine 269, glycine 291, and glutamine 300.

Belongs to the ThiI family.

It localises to the cytoplasm. It catalyses the reaction [ThiI sulfur-carrier protein]-S-sulfanyl-L-cysteine + a uridine in tRNA + 2 reduced [2Fe-2S]-[ferredoxin] + ATP + H(+) = [ThiI sulfur-carrier protein]-L-cysteine + a 4-thiouridine in tRNA + 2 oxidized [2Fe-2S]-[ferredoxin] + AMP + diphosphate. It carries out the reaction [ThiS sulfur-carrier protein]-C-terminal Gly-Gly-AMP + S-sulfanyl-L-cysteinyl-[cysteine desulfurase] + AH2 = [ThiS sulfur-carrier protein]-C-terminal-Gly-aminoethanethioate + L-cysteinyl-[cysteine desulfurase] + A + AMP + 2 H(+). The protein operates within cofactor biosynthesis; thiamine diphosphate biosynthesis. In terms of biological role, catalyzes the ATP-dependent transfer of a sulfur to tRNA to produce 4-thiouridine in position 8 of tRNAs, which functions as a near-UV photosensor. Also catalyzes the transfer of sulfur to the sulfur carrier protein ThiS, forming ThiS-thiocarboxylate. This is a step in the synthesis of thiazole, in the thiamine biosynthesis pathway. The sulfur is donated as persulfide by IscS. This chain is Probable tRNA sulfurtransferase, found in Thermococcus kodakarensis (strain ATCC BAA-918 / JCM 12380 / KOD1) (Pyrococcus kodakaraensis (strain KOD1)).